Consider the following 206-residue polypeptide: ATP phosphoribosyltransferase (206 aa).

This sequence belongs to the ATP phosphoribosyltransferase family. Short subfamily. In terms of assembly, heteromultimer composed of HisG and HisZ subunits.

The protein resides in the cytoplasm. The enzyme catalyses 1-(5-phospho-beta-D-ribosyl)-ATP + diphosphate = 5-phospho-alpha-D-ribose 1-diphosphate + ATP. It functions in the pathway amino-acid biosynthesis; L-histidine biosynthesis; L-histidine from 5-phospho-alpha-D-ribose 1-diphosphate: step 1/9. Functionally, catalyzes the condensation of ATP and 5-phosphoribose 1-diphosphate to form N'-(5'-phosphoribosyl)-ATP (PR-ATP). Has a crucial role in the pathway because the rate of histidine biosynthesis seems to be controlled primarily by regulation of HisG enzymatic activity. The polypeptide is ATP phosphoribosyltransferase (Thermus thermophilus (strain ATCC 27634 / DSM 579 / HB8)).